Here is a 414-residue protein sequence, read N- to C-terminus: tRNA dimethylallyltransferase (414 aa).

33-40 (APTASGKT) is a binding site for ATP. Residue 35–40 (TASGKT) participates in substrate binding. Interaction with substrate tRNA stretches follow at residues 58-61 (DSAL), 182-186 (QRITR), and 266-271 (RCVGYR).

This sequence belongs to the IPP transferase family. As to quaternary structure, monomer. The cofactor is Mg(2+).

It catalyses the reaction adenosine(37) in tRNA + dimethylallyl diphosphate = N(6)-dimethylallyladenosine(37) in tRNA + diphosphate. Functionally, catalyzes the transfer of a dimethylallyl group onto the adenine at position 37 in tRNAs that read codons beginning with uridine, leading to the formation of N6-(dimethylallyl)adenosine (i(6)A). This chain is tRNA dimethylallyltransferase, found in Psychrobacter arcticus (strain DSM 17307 / VKM B-2377 / 273-4).